The primary structure comprises 660 residues: Bifunctional polymyxin resistance protein ArnA (660 aa).

The segment at 1 to 304 (MKTVVFAYHD…TLGLVQGSRL (304 aa)) is formyltransferase ArnAFT. 86-88 (HLI) is a binding site for (6R)-10-formyltetrahydrofolate. His104 functions as the Proton donor; for formyltransferase activity in the catalytic mechanism. (6R)-10-formyltetrahydrofolate is bound by residues Arg114 and 136–140 (VKRAD). Residues 314–660 (RRTRVLILGV…RTVDLTDKPS (347 aa)) are dehydrogenase ArnADH. NAD(+)-binding positions include Asp347 and 368 to 369 (DI). UDP-alpha-D-glucuronate-binding positions include Ala393, Tyr398, and 432-433 (TS). The active-site Proton acceptor; for decarboxylase activity is the Glu434. UDP-alpha-D-glucuronate contacts are provided by residues Arg460, Asn492, 526–535 (KLIDGGKQKR), and Tyr613. Arg619 (proton donor; for decarboxylase activity) is an active-site residue.

The protein in the N-terminal section; belongs to the Fmt family. UDP-L-Ara4N formyltransferase subfamily. It in the C-terminal section; belongs to the NAD(P)-dependent epimerase/dehydratase family. UDP-glucuronic acid decarboxylase subfamily. In terms of assembly, homohexamer, formed by a dimer of trimers.

It carries out the reaction UDP-alpha-D-glucuronate + NAD(+) = UDP-beta-L-threo-pentopyranos-4-ulose + CO2 + NADH. The enzyme catalyses UDP-4-amino-4-deoxy-beta-L-arabinose + (6R)-10-formyltetrahydrofolate = UDP-4-deoxy-4-formamido-beta-L-arabinose + (6S)-5,6,7,8-tetrahydrofolate + H(+). The protein operates within nucleotide-sugar biosynthesis; UDP-4-deoxy-4-formamido-beta-L-arabinose biosynthesis; UDP-4-deoxy-4-formamido-beta-L-arabinose from UDP-alpha-D-glucuronate: step 1/3. Its pathway is nucleotide-sugar biosynthesis; UDP-4-deoxy-4-formamido-beta-L-arabinose biosynthesis; UDP-4-deoxy-4-formamido-beta-L-arabinose from UDP-alpha-D-glucuronate: step 3/3. It participates in bacterial outer membrane biogenesis; lipopolysaccharide biosynthesis. In terms of biological role, bifunctional enzyme that catalyzes the oxidative decarboxylation of UDP-glucuronic acid (UDP-GlcUA) to UDP-4-keto-arabinose (UDP-Ara4O) and the addition of a formyl group to UDP-4-amino-4-deoxy-L-arabinose (UDP-L-Ara4N) to form UDP-L-4-formamido-arabinose (UDP-L-Ara4FN). The modified arabinose is attached to lipid A and is required for resistance to polymyxin and cationic antimicrobial peptides. The polypeptide is Bifunctional polymyxin resistance protein ArnA (Escherichia coli O157:H7).